The sequence spans 124 residues: uncharacterized protein (124 aa).

A helical transmembrane segment spans residues 13–33; that stretch reads IIFMALYFVITGIVIRLIGYS.

It is found in the membrane. This is an uncharacterized protein from Bacillus anthracis.